The primary structure comprises 202 residues: 7-methyl-GTP pyrophosphatase (202 aa).

The Proton acceptor role is filled by D70.

The protein belongs to the Maf family. YceF subfamily. The cofactor is a divalent metal cation.

It is found in the cytoplasm. It carries out the reaction N(7)-methyl-GTP + H2O = N(7)-methyl-GMP + diphosphate + H(+). Functionally, nucleoside triphosphate pyrophosphatase that hydrolyzes 7-methyl-GTP (m(7)GTP). May have a dual role in cell division arrest and in preventing the incorporation of modified nucleotides into cellular nucleic acids. The polypeptide is 7-methyl-GTP pyrophosphatase (Pseudoalteromonas translucida (strain TAC 125)).